The sequence spans 653 residues: Fructose-1,6-bisphosphatase class 3 (653 aa).

The protein belongs to the FBPase class 3 family. Requires Mn(2+) as cofactor.

The catalysed reaction is beta-D-fructose 1,6-bisphosphate + H2O = beta-D-fructose 6-phosphate + phosphate. Its pathway is carbohydrate biosynthesis; gluconeogenesis. In Listeria monocytogenes serotype 4b (strain CLIP80459), this protein is Fructose-1,6-bisphosphatase class 3.